The primary structure comprises 847 residues: Signal transducer and activator of transcription 6 (847 aa).

Ser-2 carries the N-acetylserine modification. The SH2 domain maps to 517-632 (WFDGVLDLTK…EAFRSHYKPE (116 aa)). Phosphotyrosine; by JAK is present on Tyr-641. The LXXLL motif motif lies at 802 to 806 (LTKLL). The segment at 809–847 (GQGESGGGSLGAQPLLQPSHYGQSGISMSHMDLRANPSW) is disordered.

Belongs to the transcription factor STAT family. In terms of assembly, forms a homodimer or a heterodimer with a related family member. Interacts with NCOA1 via its C-terminal LXXLL motif. Tyrosine phosphorylated on Tyr-641 following stimulation by IL4/interleukin-4. Tyrosine phosphorylated following stimulation by IL3/interleukin-3. Dephosphorylation on tyrosine residues by PTPN2 negatively regulates the IL4/interleukin-4 mediated signaling. Post-translationally, mono-ADP-ribosylated by PARP14.

It localises to the cytoplasm. It is found in the nucleus. Carries out a dual function: signal transduction and activation of transcription. Involved in IL4/interleukin-4- and IL3/interleukin-3-mediated signaling. The chain is Signal transducer and activator of transcription 6 (STAT6) from Homo sapiens (Human).